The sequence spans 688 residues: Polyribonucleotide nucleotidyltransferase (688 aa).

Mg(2+) is bound by residues Asp484 and Asp490. One can recognise a KH domain in the interval 550 to 609 (PTTEIFNVAPDKIVEIIGQGGRVIREIVEKFEVKIDLNKPSGEVKIMGNKERVLKTKEFI). Positions 626 to 688 (DEVLEAQVKR…NKGKIALDLA (63 aa)) constitute an S1 motif domain.

It belongs to the polyribonucleotide nucleotidyltransferase family. The cofactor is Mg(2+).

The protein localises to the cytoplasm. The catalysed reaction is RNA(n+1) + phosphate = RNA(n) + a ribonucleoside 5'-diphosphate. Involved in mRNA degradation. Catalyzes the phosphorolysis of single-stranded polyribonucleotides processively in the 3'- to 5'-direction. The sequence is that of Polyribonucleotide nucleotidyltransferase from Helicobacter pylori (strain Shi470).